Here is a 703-residue protein sequence, read N- to C-terminus: MQSIDLRLPSTSANHSISESLEHSKSELNELSNVSESESYFDITKKLHALSTVVQRQQREIDNQKRDLCTKTKHIEELQTLLSNANIMSDGASSQNDAFAHNPSTSVSVELVRPVVGTKKHAVYATSAPKSMSLQDSLSVPSATALADVSSSLNYSRKLSSNSIKSTNAPVFGTAVKNVTGENILSASSSEENLNSNRNGDPKFRFSVSPWISSSNFNPYEASLANFQSDNCKLKSHNSLPSIRTNVRYSNSKPSTPLSPEDVDLGTYTVKNRDSWSNEVNLSASTNNLSTNTSGTLKPYSLSSSRSSSYSKGVNSAASLQSIWETMNNSNPSVIPESTSSREPAARYRKISERNAVYDWNVIIDKIIVSNDQQSSIFLQQKLKISSYDMKQNIVDSIISQIHPLMLNRFGNFLVQRCFEHGTAPQIRQMGSAMLGNMLKLATDPFGCHVVQKAIDNVTEDIKLAMMDELFLTIDVTIMHHYACHVWQKLFETQWYEYPVNVMNRVNNALRGKWHEVAVGENGSLVVQNMFENCVEKDKRECIEEIIFHLDGIARGQWGNWVVQHMVENGQGEDLKRVIDALLNRAVEFSIDQFASKVIEKAIKSGPKNFISLYLKQITNARVDRTRQPLIDIASDQYGNYLIQQIIQLGQPAEKNLVITHIKKHMVSLRGSKYGQKVAYLVEKWNSQKQVSSVINYNCNTDL.

Composition is skewed to polar residues over residues 1 to 19 (MQSI…SISE) and 245 to 258 (TNVR…STPL). Disordered regions lie at residues 1–29 (MQSI…SELN), 245–265 (TNVR…DVDL), and 284–309 (ASTN…RSSS). The PUM-HD domain occupies 331-686 (NPSVIPESTS…KVAYLVEKWN (356 aa)). Pumilio repeat units lie at residues 361 to 396 (NVII…NIVD), 397 to 432 (SIIS…QMGS), 433 to 468 (AMLG…AMMD), 469 to 504 (ELFL…NVMN), 509 to 544 (ALRG…ECIE), 545 to 580 (EIIF…RVID), 581 to 616 (ALLN…LYLK), and 625 to 660 (RTRQ…LVIT).

This is Meiotic coiled-coil protein 2 (mcp2) from Schizosaccharomyces pombe (strain 972 / ATCC 24843) (Fission yeast).